We begin with the raw amino-acid sequence, 424 residues long: Enolase (424 aa).

A (2R)-2-phosphoglycerate-binding site is contributed by glutamine 162. Glutamate 204 serves as the catalytic Proton donor. Mg(2+) contacts are provided by aspartate 241, glutamate 284, and aspartate 311. (2R)-2-phosphoglycerate contacts are provided by lysine 336, arginine 365, serine 366, and lysine 387. The Proton acceptor role is filled by lysine 336.

It belongs to the enolase family. It depends on Mg(2+) as a cofactor.

It localises to the cytoplasm. It is found in the secreted. Its subcellular location is the cell surface. The catalysed reaction is (2R)-2-phosphoglycerate = phosphoenolpyruvate + H2O. The protein operates within carbohydrate degradation; glycolysis; pyruvate from D-glyceraldehyde 3-phosphate: step 4/5. Functionally, catalyzes the reversible conversion of 2-phosphoglycerate (2-PG) into phosphoenolpyruvate (PEP). It is essential for the degradation of carbohydrates via glycolysis. The protein is Enolase of Rhizobium etli (strain ATCC 51251 / DSM 11541 / JCM 21823 / NBRC 15573 / CFN 42).